Reading from the N-terminus, the 256-residue chain is Leucyl/phenylalanyl-tRNA--protein transferase (256 aa).

The disordered stretch occupies residues Asp-232–Thr-256. Residues Asp-245–Thr-256 show a composition bias toward basic and acidic residues.

The protein belongs to the L/F-transferase family.

The protein localises to the cytoplasm. It carries out the reaction N-terminal L-lysyl-[protein] + L-leucyl-tRNA(Leu) = N-terminal L-leucyl-L-lysyl-[protein] + tRNA(Leu) + H(+). It catalyses the reaction N-terminal L-arginyl-[protein] + L-leucyl-tRNA(Leu) = N-terminal L-leucyl-L-arginyl-[protein] + tRNA(Leu) + H(+). The catalysed reaction is L-phenylalanyl-tRNA(Phe) + an N-terminal L-alpha-aminoacyl-[protein] = an N-terminal L-phenylalanyl-L-alpha-aminoacyl-[protein] + tRNA(Phe). Functions in the N-end rule pathway of protein degradation where it conjugates Leu, Phe and, less efficiently, Met from aminoacyl-tRNAs to the N-termini of proteins containing an N-terminal arginine or lysine. This Chromohalobacter salexigens (strain ATCC BAA-138 / DSM 3043 / CIP 106854 / NCIMB 13768 / 1H11) protein is Leucyl/phenylalanyl-tRNA--protein transferase.